Here is a 235-residue protein sequence, read N- to C-terminus: Phosphate-specific transport system accessory protein PhoU homolog 2 (235 aa).

This sequence belongs to the PhoU family. Homodimer.

Its subcellular location is the cytoplasm. Its function is as follows. Plays a role in the regulation of phosphate uptake. The protein is Phosphate-specific transport system accessory protein PhoU homolog 2 (phoU2) of Thermotoga maritima (strain ATCC 43589 / DSM 3109 / JCM 10099 / NBRC 100826 / MSB8).